We begin with the raw amino-acid sequence, 246 residues long: uncharacterized protein (246 aa).

Positions 1–24 (MGAPLRHCLLVAAALSLGCGVAAA) are cleaved as a signal peptide. 2 consecutive transmembrane segments (helical) span residues 71–91 (YYLG…IGLV) and 104–124 (FTCA…AGGA).

The protein localises to the cell membrane. This is an uncharacterized protein from Mycobacterium tuberculosis (strain ATCC 25618 / H37Rv).